The sequence spans 381 residues: Dihydroorotate dehydrogenase (quinone) (381 aa).

Residues 77–81 and Ala101 each bind FMN; that span reads AGCDK. Residue Lys81 participates in substrate binding. Substrate is bound at residue 126–129; sequence NRLG. Residues Asn158 and Asn191 each contribute to the FMN site. Asn191 is a substrate binding site. The Nucleophile role is filled by Ser194. Asn196 serves as a coordination point for substrate. FMN-binding residues include Lys229 and Thr257. Residue 258 to 259 coordinates substrate; sequence NT. Residues Gly287, Gly316, and 337-338 each bind FMN; that span reads YT.

The protein belongs to the dihydroorotate dehydrogenase family. Type 2 subfamily. In terms of assembly, monomer. FMN is required as a cofactor.

The protein resides in the cell membrane. It carries out the reaction (S)-dihydroorotate + a quinone = orotate + a quinol. It participates in pyrimidine metabolism; UMP biosynthesis via de novo pathway; orotate from (S)-dihydroorotate (quinone route): step 1/1. Functionally, catalyzes the conversion of dihydroorotate to orotate with quinone as electron acceptor. The sequence is that of Dihydroorotate dehydrogenase (quinone) (pyrD) from Synechocystis sp. (strain ATCC 27184 / PCC 6803 / Kazusa).